A 314-amino-acid chain; its full sequence is tRNA pseudouridine synthase B (314 aa).

His-43 is a binding site for substrate. The Nucleophile role is filled by Asp-48. Substrate is bound by residues Tyr-76, Tyr-179, and Leu-200.

Belongs to the pseudouridine synthase TruB family. Type 1 subfamily.

The enzyme catalyses uridine(55) in tRNA = pseudouridine(55) in tRNA. In terms of biological role, responsible for synthesis of pseudouridine from uracil-55 in the psi GC loop of transfer RNAs. This is tRNA pseudouridine synthase B from Serratia proteamaculans (strain 568).